Consider the following 89-residue polypeptide: MARTKKVGITGRFGPRYGRKAKRAVKKIEEEMKRKHVCPSCDRPGVKRESRGIWKCRKCGAVFTGGAYLPVTPMGKTAARNIKRIVGGK.

Zn(2+)-binding residues include Cys38, Cys41, Cys56, and Cys59. The C4-type zinc-finger motif lies at 38–59; it reads CPSCDRPGVKRESRGIWKCRKC.

It belongs to the eukaryotic ribosomal protein eL43 family. Putative zinc-binding subfamily. Part of the 50S ribosomal subunit. It depends on Zn(2+) as a cofactor.

In terms of biological role, binds to the 23S rRNA. The polypeptide is Large ribosomal subunit protein eL43 (Methanothermobacter thermautotrophicus (strain ATCC 29096 / DSM 1053 / JCM 10044 / NBRC 100330 / Delta H) (Methanobacterium thermoautotrophicum)).